Consider the following 536-residue polypeptide: Formate--tetrahydrofolate ligase (536 aa).

51 to 58 (TPAGEGKT) contacts ATP.

This sequence belongs to the formate--tetrahydrofolate ligase family.

The enzyme catalyses (6S)-5,6,7,8-tetrahydrofolate + formate + ATP = (6R)-10-formyltetrahydrofolate + ADP + phosphate. Its pathway is one-carbon metabolism; tetrahydrofolate interconversion. The protein is Formate--tetrahydrofolate ligase of Thermoplasma acidophilum (strain ATCC 25905 / DSM 1728 / JCM 9062 / NBRC 15155 / AMRC-C165).